We begin with the raw amino-acid sequence, 608 residues long: Glutamine--fructose-6-phosphate aminotransferase [isomerizing] (608 aa).

The active-site Nucleophile; for GATase activity is C2. The Glutamine amidotransferase type-2 domain occupies 2 to 217 (CGIVGYIGKK…DNEFVLMTKD (216 aa)). SIS domains follow at residues 284–424 (ISKE…EKGT) and 453–598 (IMKK…VDKP). The For Fru-6P isomerization activity role is filled by K603.

In terms of assembly, homodimer.

It localises to the cytoplasm. It carries out the reaction D-fructose 6-phosphate + L-glutamine = D-glucosamine 6-phosphate + L-glutamate. Its function is as follows. Catalyzes the first step in hexosamine metabolism, converting fructose-6P into glucosamine-6P using glutamine as a nitrogen source. This Clostridium tetani (strain Massachusetts / E88) protein is Glutamine--fructose-6-phosphate aminotransferase [isomerizing].